Reading from the N-terminus, the 543-residue chain is Excitatory amino acid transporter 1 (543 aa).

At methionine 1–arginine 47 the chain is on the cytoplasmic side. Residues asparagine 48–leucine 68 traverse the membrane as a helical segment. At arginine 69–glutamate 86 the chain is on the extracellular side. Residues leucine 87 to methionine 108 form a helical membrane-spanning segment. Residues alanine 109–arginine 122 lie on the Cytoplasmic side of the membrane. The helical transmembrane segment at alanine 123–isoleucine 145 threads the bilayer. Over histidine 146–glycine 236 the chain is Extracellular. Residues asparagine 206 and asparagine 216 are each glycosylated (N-linked (GlcNAc...) asparagine). A helical membrane pass occupies residues serine 237–methionine 260. At lysine 261–glutamate 269 the chain is on the cytoplasmic side. The helical transmembrane segment at phenylalanine 270–isoleucine 297 threads the bilayer. Over alanine 298 to threonine 318 the chain is Extracellular. A helical transmembrane segment spans residues valine 319–valine 340. The Cytoplasmic portion of the chain corresponds to threonine 341–proline 345. An intramembrane region (discontinuously helical) is located at residues tryptophan 346–leucine 376. Serine 363–serine 365 provides a ligand contact to L-aspartate. Residues glutamate 377 to arginine 385 lie on the Cytoplasmic side of the membrane. Residues isoleucine 386–phenylalanine 412 form a helical membrane-spanning segment. Glycine 394, threonine 396, and asparagine 398 together coordinate Na(+). Threonine 402 contributes to the L-aspartate binding site. The Extracellular segment spans residues isoleucine 413–glutamine 425. The segment at residues isoleucine 426 to glycine 459 is an intramembrane region (discontinuously helical). Residue isoleucine 443–glycine 447 coordinates L-aspartate. Topologically, residues leucine 460–aspartate 472 are extracellular. A helical membrane pass occupies residues tryptophan 473 to valine 494. Residues aspartate 476 and asparagine 483 each contribute to the L-aspartate site. The Na(+) site is built by asparagine 483 and aspartate 487. At glutamate 495 to methionine 543 the chain is on the cytoplasmic side. At serine 512 the chain carries Phosphoserine. The tract at residues proline 522 to methionine 543 is disordered. Basic and acidic residues predominate over residues glutamate 531–methionine 543.

Belongs to the dicarboxylate/amino acid:cation symporter (DAACS) (TC 2.A.23) family. SLC1A3 subfamily. As to quaternary structure, homotrimer. In terms of processing, glycosylated. In terms of tissue distribution, detected in brain, in Bergmann glia arborising into the molecular layer of the cerebellum (at protein level). Localized in brain and is highly enriched in the Purkinje cell layer in cerebellum. Intermediate level in lung, low level in spleen, skeletal muscle and testis.

The protein localises to the cell membrane. It catalyses the reaction K(+)(in) + L-glutamate(out) + 3 Na(+)(out) + H(+)(out) = K(+)(out) + L-glutamate(in) + 3 Na(+)(in) + H(+)(in). The catalysed reaction is K(+)(in) + L-aspartate(out) + 3 Na(+)(out) + H(+)(out) = K(+)(out) + L-aspartate(in) + 3 Na(+)(in) + H(+)(in). It carries out the reaction D-aspartate(out) + K(+)(in) + 3 Na(+)(out) + H(+)(out) = D-aspartate(in) + K(+)(out) + 3 Na(+)(in) + H(+)(in). Its function is as follows. Sodium-dependent, high-affinity amino acid transporter that mediates the uptake of L-glutamate and also L-aspartate and D-aspartate. Functions as a symporter that transports one amino acid molecule together with two or three Na(+) ions and one proton, in parallel with the counter-transport of one K(+) ion. Plays a redundant role in the rapid removal of released glutamate from the synaptic cleft, which is essential for terminating the postsynaptic action of glutamate. The polypeptide is Excitatory amino acid transporter 1 (Slc1a3) (Mus musculus (Mouse)).